A 97-amino-acid chain; its full sequence is YcgL domain-containing protein Pmen_1774 (97 aa).

The YcgL domain maps to Arg-3 to Pro-87.

In Ectopseudomonas mendocina (strain ymp) (Pseudomonas mendocina), this protein is YcgL domain-containing protein Pmen_1774.